We begin with the raw amino-acid sequence, 320 residues long: Ferrochelatase (320 aa).

Positions 194 and 275 each coordinate Fe cation.

It belongs to the ferrochelatase family. Monomer.

The protein resides in the cytoplasm. The enzyme catalyses heme b + 2 H(+) = protoporphyrin IX + Fe(2+). The protein operates within porphyrin-containing compound metabolism; protoheme biosynthesis; protoheme from protoporphyrin-IX: step 1/1. Catalyzes the ferrous insertion into protoporphyrin IX. This is Ferrochelatase from Escherichia coli O81 (strain ED1a).